A 72-amino-acid polypeptide reads, in one-letter code: Protein kish-A (72 aa).

An N-terminal signal peptide occupies residues M1–S26. Residues L27–K53 are Extracellular-facing. N35 carries N-linked (GlcNAc...) asparagine glycosylation. Residues S54–M71 traverse the membrane as a helical segment. A topological domain (cytoplasmic) is located at residue Q72.

This sequence belongs to the KISH family.

It localises to the golgi apparatus membrane. In terms of biological role, involved in the early part of the secretory pathway. This Xenopus laevis (African clawed frog) protein is Protein kish-A (tmem167a).